The primary structure comprises 118 residues: Small ribosomal subunit protein uS13 (118 aa).

Residues 92–118 (RKGLPVRGQRTKTNARTRKGPRKPIRK) are disordered.

Belongs to the universal ribosomal protein uS13 family. In terms of assembly, part of the 30S ribosomal subunit. Forms a loose heterodimer with protein S19. Forms two bridges to the 50S subunit in the 70S ribosome.

Its function is as follows. Located at the top of the head of the 30S subunit, it contacts several helices of the 16S rRNA. In the 70S ribosome it contacts the 23S rRNA (bridge B1a) and protein L5 of the 50S subunit (bridge B1b), connecting the 2 subunits; these bridges are implicated in subunit movement. Contacts the tRNAs in the A and P-sites. The sequence is that of Small ribosomal subunit protein uS13 from Pseudomonas putida (strain W619).